We begin with the raw amino-acid sequence, 633 residues long: MADQRMDISSTISDFMSPDPADLISSSLSTSGVDCNRKRKGSSTDYQLDGFPFEEGMDTDKDDQHGRLDYADQQGRIKNAREAHSQIEKRRRDKMNSFIDELASLVPTCNAMSRKLDKLTVLRMAVQHMKTLRGATNPYTEANYKPAFLSDDELKHLILRAADGFLFVVGCDRGKILFVSESVFKILNYSQNDLIGQSLFDYLHPKDIAKVKEQLSSSDTAPRERLIDAKTGLPVKTDITPGPSRLCSGARRSFFCRMKCNRPSVKVEDKDFPSTCSKKKADRKSFCTIHSTGYLKSWPPTKMGLDEDNEPDNEGCNLSCLVAIGRLHPHVVPQPVNGEIRVKPTEYVSRHAIDGKFVFVDQRATAILAYLPQELLGTSCYEYFHQDDIGHLAECHRQVLQTREKITTNCYKFKIKDGSFITLRSRWFSFMNPWTKEVEYIVSTNTVVSTSVLDSGDAAFPQLAASPHSMDSVLQAGEGGPKRSHPTVPGIPGGTRAGAGKIGRMIAEEIMEIHRIRGSSPSSCGSSPLNITSTPPPDTSSPGSKKILNGGTPDISSAGLLSGQIQDSSGYPYSDNSSILGENSHIGIDMIDNDQGSSSPSNDEAAMAVIMSLLEADAGLGGPVDFSDLPWPL.

The segment at 1 to 65 (MADQRMDISS…GMDTDKDDQH (65 aa)) is disordered. Phosphoserine; by GSK3-beta is present on S17. The span at 24 to 33 (ISSSLSTSGV) shows a compositional bias: polar residues. Positions 36–41 (NRKRKG) match the Nuclear localization signal motif. Residues 79–132 (NAREAHSQIEKRRRDKMNSFIDELASLVPTCNAMSRKLDKLTVLRMAVQHMKTL) form the bHLH domain. The residue at position 85 (S85) is a Phosphoserine. A Phosphoserine; by CK2 modification is found at S97. The Nuclear export signal 1 signature appears at 149 to 159 (LSDDELKHLIL). The PAS 1 domain maps to 150-222 (SDDELKHLIL…EQLSSSDTAP (73 aa)). Residue K259 forms a Glycyl lysine isopeptide (Lys-Gly) (interchain with G-Cter in SUMO2 and SUMO3) linkage. K266 participates in a covalent cross-link: Glycyl lysine isopeptide (Lys-Gly) (interchain with G-Cter in SUMO). Residues 333–403 (PQPVNGEIRV…ECHRQVLQTR (71 aa)) form the PAS 2 domain. The Nuclear export signal 2 motif lies at 368–376 (LAYLPQELL). One can recognise a PAC domain in the interval 408-451 (TNCYKFKIKDGSFITLRSRWFSFMNPWTKEVEYIVSTNTVVSTS). Disordered regions lie at residues 469–499 (SMDSVLQAGEGGPKRSHPTVPGIPGGTRAGA) and 518–578 (GSSP…DNSS). Residues 518 to 528 (GSSPSSCGSSP) show a composition bias toward low complexity. The residue at position 545 (K545) is an N6-acetyllysine. Residues 563–578 (GQIQDSSGYPYSDNSS) show a composition bias toward polar residues.

Component of the circadian clock oscillator which includes the CRY1/2 proteins, CLOCK or NPAS2, BMAL1 or BMAL2, CSNK1D and/or CSNK1E, TIMELESS and the PER1/2/3 proteins. Forms a heterodimer with CLOCK. The CLOCK-BMAL1 heterodimer is required for E-box-dependent transactivation, for CLOCK nuclear translocation and degradation, and, for phosphorylation of both CLOCK and BMAL1. Interacts with PER1, PER2, CRY1 and CRY2 and this interaction requires a translocation to the nucleus. Interaction of the CLOCK-BMAL1 heterodimer with PER or CRY inhibits transcription activation. Interacts with NPAS2. Post-translationally, ubiquitinated, leading to its proteasomal degradation. Deubiquitinated by USP9X. In terms of processing, O-glycosylated; contains O-GlcNAc. O-glycosylation by OGT prevents protein degradation by inhibiting ubiquitination. It also stabilizes the CLOCK-BMAL1 heterodimer thereby increasing CLOCK-BMAL1-mediated transcription of genes in the negative loop of the circadian clock such as PER1/2/3 and CRY1/2. Acetylated on Lys-545 by CLOCK during the repression phase of the circadian cycle. Acetylation facilitates recruitment of CRY1 protein and initiates the repression phase of the circadian cycle. Acetylated at Lys-545 by KAT5 during the activation phase of the cycle, leading to recruitment of the positive transcription elongation factor b (P-TEFb) and BRD4, followed by productive elongation of circadian transcripts. Deacetylated by SIRT1, which may result in decreased protein stability. Post-translationally, phosphorylated upon dimerization with CLOCK. Phosphorylation enhances the transcriptional activity, alters the subcellular localization and decreases the stability of the CLOCK-BMAL1 heterodimer by promoting its degradation. Phosphorylation shows circadian variations in the liver with a peak between CT10 to CT14. Phosphorylation at Ser-97 by CK2 is essential for its nuclear localization, its interaction with CLOCK and controls CLOCK nuclear entry. Dephosphorylation at Ser-85 is important for dimerization with CLOCK and transcriptional activity. In terms of processing, sumoylated on Lys-266 upon dimerization with CLOCK. Predominantly conjugated to poly-SUMO2/3 rather than SUMO1 and the level of these conjugates undergo rhythmic variation, peaking at CT9-CT12. Sumoylation localizes it exclusively to the PML body and promotes its ubiquitination in the PML body, ubiquitin-dependent proteasomal degradation and the transcriptional activity of the CLOCK-BMAL1 heterodimer. Undergoes lysosome-mediated degradation in a time-dependent manner in the liver. Expressed in pineal gland and retina.

It localises to the nucleus. It is found in the cytoplasm. The protein localises to the PML body. Transcriptional activator which forms a core component of the circadian clock. The circadian clock, an internal time-keeping system, regulates various physiological processes through the generation of approximately 24 hour circadian rhythms in gene expression, which are translated into rhythms in metabolism and behavior. It is derived from the Latin roots 'circa' (about) and 'diem' (day) and acts as an important regulator of a wide array of physiological functions including metabolism, sleep, body temperature, blood pressure, endocrine, immune, cardiovascular, and renal function. Consists of two major components: the central clock, residing in the suprachiasmatic nucleus (SCN) of the brain, and the peripheral clocks that are present in nearly every tissue and organ system. Both the central and peripheral clocks can be reset by environmental cues, also known as Zeitgebers (German for 'timegivers'). The predominant Zeitgeber for the central clock is light, which is sensed by retina and signals directly to the SCN. The central clock entrains the peripheral clocks through neuronal and hormonal signals, body temperature and feeding-related cues, aligning all clocks with the external light/dark cycle. Circadian rhythms allow an organism to achieve temporal homeostasis with its environment at the molecular level by regulating gene expression to create a peak of protein expression once every 24 hours to control when a particular physiological process is most active with respect to the solar day. Transcription and translation of core clock components (CLOCK, NPAS2, BMAL1, BMAL2, PER1, PER2, PER3, CRY1 and CRY2) plays a critical role in rhythm generation, whereas delays imposed by post-translational modifications (PTMs) are important for determining the period (tau) of the rhythms (tau refers to the period of a rhythm and is the length, in time, of one complete cycle). A diurnal rhythm is synchronized with the day/night cycle, while the ultradian and infradian rhythms have a period shorter and longer than 24 hours, respectively. Disruptions in the circadian rhythms contribute to the pathology of cardiovascular diseases, cancer, metabolic syndromes and aging. A transcription/translation feedback loop (TTFL) forms the core of the molecular circadian clock mechanism. Transcription factors, CLOCK or NPAS2 and BMAL1 or BMAL2, form the positive limb of the feedback loop, act in the form of a heterodimer and activate the transcription of core clock genes and clock-controlled genes (involved in key metabolic processes), harboring E-box elements (5'-CACGTG-3') within their promoters. The core clock genes: PER1/2/3 and CRY1/2 which are transcriptional repressors form the negative limb of the feedback loop and interact with the CLOCK|NPAS2-BMAL1|BMAL2 heterodimer inhibiting its activity and thereby negatively regulating their own expression. This heterodimer also activates nuclear receptors NR1D1/2 and RORA/B/G, which form a second feedback loop and which activate and repress BMAL1 transcription, respectively. The preferred binding motif for the CLOCK-BMAL1 heterodimer is 5'-CACGTGA-3', which contains a flanking adenine nucleotide at the 3-prime end of the canonical 6-nucleotide E-box sequence. CLOCK specifically binds to the half-site 5'-CAC-3', while BMAL1 binds to the half-site 5'-GTGA-3'. Essential for the rhythmic interaction of CLOCK with ASS1 and plays a critical role in positively regulating CLOCK-mediated acetylation of ASS1. Plays a role in protecting against lethal sepsis by limiting the expression of immune checkpoint protein CD274 in macrophages in a PKM2-dependent manner. This chain is Basic helix-loop-helix ARNT-like protein 1 (BMAL1), found in Gallus gallus (Chicken).